Consider the following 305-residue polypeptide: tRNA-cytidine(32) 2-sulfurtransferase (305 aa).

A disordered region spans residues 1-20; that stretch reads MTAVLPLPHPLADPAPRDPR. A PP-loop motif motif is present at residues 59-64; the sequence is SGGKDS. Residues C134, C137, and C225 each coordinate [4Fe-4S] cluster. The span at 282–293 shows a compositional bias: low complexity; it reads DAPPDLAPDPGA. The tract at residues 282–305 is disordered; that stretch reads DAPPDLAPDPGAWLTASDATHDSD.

This sequence belongs to the TtcA family. In terms of assembly, homodimer. It depends on Mg(2+) as a cofactor. Requires [4Fe-4S] cluster as cofactor.

It localises to the cytoplasm. It carries out the reaction cytidine(32) in tRNA + S-sulfanyl-L-cysteinyl-[cysteine desulfurase] + AH2 + ATP = 2-thiocytidine(32) in tRNA + L-cysteinyl-[cysteine desulfurase] + A + AMP + diphosphate + H(+). It functions in the pathway tRNA modification. Catalyzes the ATP-dependent 2-thiolation of cytidine in position 32 of tRNA, to form 2-thiocytidine (s(2)C32). The sulfur atoms are provided by the cysteine/cysteine desulfurase (IscS) system. The polypeptide is tRNA-cytidine(32) 2-sulfurtransferase (Xanthomonas oryzae pv. oryzae (strain MAFF 311018)).